The primary structure comprises 349 residues: Protein RecA (349 aa).

Gly67 to Thr74 contributes to the ATP binding site.

Belongs to the RecA family.

The protein localises to the cytoplasm. Its function is as follows. Can catalyze the hydrolysis of ATP in the presence of single-stranded DNA, the ATP-dependent uptake of single-stranded DNA by duplex DNA, and the ATP-dependent hybridization of homologous single-stranded DNAs. It interacts with LexA causing its activation and leading to its autocatalytic cleavage. In Chlamydia abortus (strain DSM 27085 / S26/3) (Chlamydophila abortus), this protein is Protein RecA.